Reading from the N-terminus, the 174-residue chain is Acetolactate synthase small subunit (174 aa).

In terms of domain architecture, ACT spans 4–78 (TLSVLVQDEA…NILNVQDVTN (75 aa)).

The protein belongs to the acetolactate synthase small subunit family. In terms of assembly, dimer of large and small chains.

It is found in the plastid. It localises to the chloroplast. The enzyme catalyses 2 pyruvate + H(+) = (2S)-2-acetolactate + CO2. Its pathway is amino-acid biosynthesis; L-isoleucine biosynthesis; L-isoleucine from 2-oxobutanoate: step 1/4. It functions in the pathway amino-acid biosynthesis; L-valine biosynthesis; L-valine from pyruvate: step 1/4. The chain is Acetolactate synthase small subunit (ilvH) from Porphyra purpurea (Red seaweed).